The chain runs to 288 residues: ATP synthase gamma chain (288 aa).

This sequence belongs to the ATPase gamma chain family. As to quaternary structure, F-type ATPases have 2 components, CF(1) - the catalytic core - and CF(0) - the membrane proton channel. CF(1) has five subunits: alpha(3), beta(3), gamma(1), delta(1), epsilon(1). CF(0) has three main subunits: a, b and c.

Its subcellular location is the cell inner membrane. Produces ATP from ADP in the presence of a proton gradient across the membrane. The gamma chain is believed to be important in regulating ATPase activity and the flow of protons through the CF(0) complex. This chain is ATP synthase gamma chain, found in Vesicomyosocius okutanii subsp. Calyptogena okutanii (strain HA).